The sequence spans 201 residues: Small ribosomal subunit protein uS4 (201 aa).

Residues 20–46 (SGTGKELSRRPYAPGQHGQDRRGSLSE) form a disordered region. Residues 93-156 (RRLDNVVYRL…KDLQIVKEAL (64 aa)) enclose the S4 RNA-binding domain.

It belongs to the universal ribosomal protein uS4 family. As to quaternary structure, part of the 30S ribosomal subunit. Contacts protein S5. The interaction surface between S4 and S5 is involved in control of translational fidelity.

Functionally, one of the primary rRNA binding proteins, it binds directly to 16S rRNA where it nucleates assembly of the body of the 30S subunit. In terms of biological role, with S5 and S12 plays an important role in translational accuracy. The protein is Small ribosomal subunit protein uS4 of Ligilactobacillus salivarius (strain UCC118) (Lactobacillus salivarius).